The sequence spans 42 residues: Protein MGF 360-20R (42 aa).

It belongs to the asfivirus MGF 360 family.

Functionally, plays a role in virus cell tropism, and may be required for efficient virus replication in macrophages. This African swine fever virus (strain Badajoz 1971 Vero-adapted) (Ba71V) protein is Protein MGF 360-20R.